A 464-amino-acid polypeptide reads, in one-letter code: IAA-amino acid hydrolase ILR1-like 6 (464 aa).

An N-terminal signal peptide occupies residues 1–24 (MDNLRKLNLLSVSLTIIFVSLTIA). Mn(2+) contacts are provided by C175, H177, E211, H235, and H433.

The protein belongs to the peptidase M20 family.

It catalyses the reaction a jasmonyl-L-amino acid + H2O = a jasmonate + an L-alpha-amino acid. Hydrolyzes certain amino acid conjugates of the plant growth regulator indole-3-acetic acid (IAA). Also hydrolyzes amino acid conjugates of jasmonic acid and 12-hydroxy jasmonic acid. This chain is IAA-amino acid hydrolase ILR1-like 6, found in Arabidopsis thaliana (Mouse-ear cress).